Consider the following 197-residue polypeptide: dTTP/UTP pyrophosphatase (197 aa).

Aspartate 70 (proton acceptor) is an active-site residue.

Belongs to the Maf family. YhdE subfamily. Homodimer. Can also form homotetramers. It depends on a divalent metal cation as a cofactor.

The protein localises to the cytoplasm. It catalyses the reaction dTTP + H2O = dTMP + diphosphate + H(+). It carries out the reaction UTP + H2O = UMP + diphosphate + H(+). The enzyme catalyses 5-methyl-UTP + H2O = 5-methyl-UMP + diphosphate + H(+). The catalysed reaction is psi-UTP + H2O = psi-UMP + diphosphate + H(+). It catalyses the reaction 5-methyl-CTP + H2O = 5-methyl-CMP + diphosphate + H(+). Nucleoside triphosphate pyrophosphatase that hydrolyzes dTTP and UTP. Can also hydrolyze TTP and the modified nucleotides 5-methyl-UTP (m(5)UTP), pseudo-UTP and 5-methyl-CTP (m(5)CTP). Has weak activity with CTP. May have a dual role in cell division arrest and in preventing the incorporation of modified nucleotides into cellular nucleic acids. Important in maintenance of cell shape. The protein is dTTP/UTP pyrophosphatase (yhdE) of Escherichia coli (strain K12).